A 349-amino-acid polypeptide reads, in one-letter code: Beta-glucanase (349 aa).

An N-terminal signal peptide occupies residues 1–27 (MNIKKTAVKSALAVAAAAAALTTNVSA). In terms of domain architecture, GH16 spans 28–197 (KDFSGAELYT…WVKVYKYTPG (170 aa)). Residue Glu79 is the Nucleophile of the active site. The active-site Proton donor is the Glu83. Positions 258–311 (SFNGQVPRDDEPAPQSSSSAPASSSSVPASSSSVPASSSSAFVPPSSSSATNAI) are disordered. Residues 270–307 (APQSSSSAPASSSSVPASSSSVPASSSSAFVPPSSSSA) are compositionally biased toward low complexity. Tandem repeats lie at residues 271–277 (PQSSSSA), 278–284 (PASSSSV), 285–291 (PASSSSV), 292–298 (PASSSSA), and 301–307 (PPSSSSA). The interval 271–307 (PQSSSSAPASSSSVPASSSSVPASSSSAFVPPSSSSA) is 5 X 7 AA tandem repeats of P-X-S-S-S-S-X.

It belongs to the glycosyl hydrolase 16 family.

The enzyme catalyses Hydrolysis of (1-&gt;4)-beta-D-glucosidic linkages in beta-D-glucans containing (1-&gt;3)- and (1-&gt;4)-bonds.. This chain is Beta-glucanase, found in Fibrobacter succinogenes (strain ATCC 19169 / S85).